Here is a 232-residue protein sequence, read N- to C-terminus: PsbP domain-containing protein 2, chloroplastic (232 aa).

Residues 1-34 (MWSQSFLGSAPKLCLFSSSLPPFSHHKIHKFFCF) constitute a chloroplast transit peptide. A thylakoid-targeting transit peptide spans 35 to 71 (AQNPSSTVSINLSKRHLNLSILTLFFNGFLLDNKAKS).

The protein belongs to the PsbP family.

It localises to the plastid. It is found in the chloroplast thylakoid lumen. This Arabidopsis thaliana (Mouse-ear cress) protein is PsbP domain-containing protein 2, chloroplastic (PPD2).